The primary structure comprises 474 residues: GTPase Der (474 aa).

2 consecutive EngA-type G domains span residues 2–166 (LRIA…NVPE) and 212–385 (LKIA…ETVS). GTP is bound by residues 8 to 15 (GRPNVGKS), 55 to 59 (DTGGV), 118 to 121 (NKAD), 218 to 225 (GRPNVGKS), 265 to 269 (DTAGL), and 330 to 333 (NKWD). Positions 386 to 470 (SKVPTPVVNK…PFDLEFKEKT (85 aa)) constitute a KH-like domain.

This sequence belongs to the TRAFAC class TrmE-Era-EngA-EngB-Septin-like GTPase superfamily. EngA (Der) GTPase family. Associates with the 50S ribosomal subunit.

GTPase that plays an essential role in the late steps of ribosome biogenesis. The polypeptide is GTPase Der (Chlamydia caviae (strain ATCC VR-813 / DSM 19441 / 03DC25 / GPIC) (Chlamydophila caviae)).